Here is a 133-residue protein sequence, read N- to C-terminus: Agglutinin alpha chain (133 aa).

The Jacalin-type lectin domain maps to 1 to 133 (GVTFDDGAYT…LDYFSIYLSL (133 aa)).

This sequence belongs to the jacalin lectin family. As to quaternary structure, formed of four alpha chains and four beta chains.

Its function is as follows. D-galactose-specific lectin, binds the T-antigen structure Gal-beta1,3-GalNAc. This is Agglutinin alpha chain from Maclura pomifera (Osage orange).